The following is an 833-amino-acid chain: Lon protease (833 aa).

Residues 3–198 (YPFMATRGVI…LIFSFLVELK (196 aa)) enclose the Lon N-terminal domain. 390–397 (GPPGTGKT) lines the ATP pocket. Residues 627–808 (YERIGAVNGL…DEIFENLFGK (182 aa)) enclose the Lon proteolytic domain. Active-site residues include serine 714 and lysine 757.

This sequence belongs to the peptidase S16 family. In terms of assembly, homohexamer. Organized in a ring with a central cavity.

The protein resides in the cytoplasm. The catalysed reaction is Hydrolysis of proteins in presence of ATP.. Functionally, ATP-dependent serine protease that mediates the selective degradation of mutant and abnormal proteins as well as certain short-lived regulatory proteins. Required for cellular homeostasis and for survival from DNA damage and developmental changes induced by stress. Degrades polypeptides processively to yield small peptide fragments that are 5 to 10 amino acids long. Binds to DNA in a double-stranded, site-specific manner. This Mycoplasma mobile (strain ATCC 43663 / 163K / NCTC 11711) (Mesomycoplasma mobile) protein is Lon protease.